The chain runs to 553 residues: Dihydroxy-acid dehydratase (553 aa).

Asp-78 contacts Mg(2+). [2Fe-2S] cluster is bound at residue Cys-119. Mg(2+) is bound by residues Asp-120 and Lys-121. Lys-121 is modified (N6-carboxylysine). Cys-191 lines the [2Fe-2S] cluster pocket. Residue Glu-444 participates in Mg(2+) binding. Ser-470 (proton acceptor) is an active-site residue.

This sequence belongs to the IlvD/Edd family. In terms of assembly, homodimer. It depends on [2Fe-2S] cluster as a cofactor. Mg(2+) is required as a cofactor.

The enzyme catalyses (2R)-2,3-dihydroxy-3-methylbutanoate = 3-methyl-2-oxobutanoate + H2O. It catalyses the reaction (2R,3R)-2,3-dihydroxy-3-methylpentanoate = (S)-3-methyl-2-oxopentanoate + H2O. It participates in amino-acid biosynthesis; L-isoleucine biosynthesis; L-isoleucine from 2-oxobutanoate: step 3/4. It functions in the pathway amino-acid biosynthesis; L-valine biosynthesis; L-valine from pyruvate: step 3/4. In terms of biological role, functions in the biosynthesis of branched-chain amino acids. Catalyzes the dehydration of (2R,3R)-2,3-dihydroxy-3-methylpentanoate (2,3-dihydroxy-3-methylvalerate) into 2-oxo-3-methylpentanoate (2-oxo-3-methylvalerate) and of (2R)-2,3-dihydroxy-3-methylbutanoate (2,3-dihydroxyisovalerate) into 2-oxo-3-methylbutanoate (2-oxoisovalerate), the penultimate precursor to L-isoleucine and L-valine, respectively. The chain is Dihydroxy-acid dehydratase from Methanosarcina barkeri (strain Fusaro / DSM 804).